Here is a 587-residue protein sequence, read N- to C-terminus: MGYDYALVHVKYTIPLAALLTVFSYPVFTRLDVVRTLFIVTIAFVATIPWDSYLIRTNVWTYPPDAVLGPTLYDIPAEELFFFIIQTYITAQLYIILNKPVLHAQYLNSPATLPQWIKSGKLVGQLALSGSVLLGTWLIAKKGEGTYLGLILVWACTFALFTWTITAHFLLALPLACTALPILLPTVYLWIVDEMALGRGTWAIESGTKLELQLFGSLEIEEATFFLVTNMLIVFGIAAFDKAVAVCDAFPEKFDKPADALAMSLLRARVFPSSKYDMQRILGIRQAAARLAKKSRSFHLASSVFPGRLRIDLTLLYSYCRLADDLVDDAATPEEAAVWISKLDRHLSLLYKDPDATSTPLASKYAAENFPPSALSALDMLPTSLLPREPLAELLKGFEMDLSFSNSAFPIADPEDLELYAARVASTVGQACLELVFCHCQHGLPDYMKAYLRNTARQMGLALQFVNISRDIAVDAKIGRVYLPTTWLKEEGLTPEDVLKSPNSEGVGKVRRRILAKALDHYGEARDSMKWIPSEARGPMIVAVESYMEIGRVLMRNGGSAAADGSGRATVPKSRRIWVAWSTLMAA.

Residues 1-242 form a lycopene beta-cyclase region; the sequence is MGYDYALVHV…IVFGIAAFDK (242 aa). 7 helical membrane-spanning segments follow: residues 8–28, 35–55, 77–97, 120–140, 150–170, 172–192, and 220–240; these read VHVK…YPVF, RTLF…SYLI, AEEL…YIIL, GKLV…WLIA, LILV…AHFL, ALPL…LWIV, and IEEA…IAAF. Residues 249–587 are phytoene synthase; it reads AFPEKFDKPA…WVAWSTLMAA (339 aa).

This sequence in the N-terminal section; belongs to the lycopene beta-cyclase family. It in the C-terminal section; belongs to the phytoene/squalene synthase family.

Its subcellular location is the membrane. The catalysed reaction is all-trans-lycopene = gamma-carotene. The enzyme catalyses gamma-carotene = all-trans-beta-carotene. It carries out the reaction 2 (2E,6E,10E)-geranylgeranyl diphosphate = 15-cis-phytoene + 2 diphosphate. It participates in carotenoid biosynthesis; beta-carotene biosynthesis. It functions in the pathway carotenoid biosynthesis; phytoene biosynthesis; all-trans-phytoene from geranylgeranyl diphosphate: step 1/1. Bifunctional enzyme that catalyzes the reactions from geranylgeranyl diphosphate to phytoene (phytoene synthase) and lycopene to beta-carotene via the intermediate gamma-carotene (lycopene cyclase). The chain is Bifunctional lycopene cyclase/phytoene synthase from Colletotrichum graminicola (strain M1.001 / M2 / FGSC 10212) (Maize anthracnose fungus).